A 328-amino-acid polypeptide reads, in one-letter code: Phenylalanine--tRNA ligase alpha subunit (328 aa).

Belongs to the class-II aminoacyl-tRNA synthetase family. Phe-tRNA synthetase alpha subunit type 1 subfamily. In terms of assembly, tetramer of two alpha and two beta subunits. It depends on Mg(2+) as a cofactor.

Its subcellular location is the cytoplasm. The enzyme catalyses tRNA(Phe) + L-phenylalanine + ATP = L-phenylalanyl-tRNA(Phe) + AMP + diphosphate + H(+). This is Phenylalanine--tRNA ligase alpha subunit from Buchnera aphidicola subsp. Baizongia pistaciae (strain Bp).